Consider the following 135-residue polypeptide: Retinol-binding protein 5 (135 aa).

Belongs to the calycin superfamily. Fatty-acid binding protein (FABP) family.

The protein localises to the cytoplasm. Intracellular transport of retinol. This chain is Retinol-binding protein 5 (RBP5), found in Pongo abelii (Sumatran orangutan).